The sequence spans 238 residues: Large ribosomal subunit protein uL2 (238 aa).

A disordered region spans residues 203-223 (GGGAWKHPGKPTTVSRNAPPG).

The protein belongs to the universal ribosomal protein uL2 family. As to quaternary structure, part of the 50S ribosomal subunit. Forms a bridge to the 30S subunit in the 70S ribosome.

Functionally, one of the primary rRNA binding proteins. Required for association of the 30S and 50S subunits to form the 70S ribosome, for tRNA binding and peptide bond formation. It has been suggested to have peptidyltransferase activity; this is somewhat controversial. Makes several contacts with the 16S rRNA in the 70S ribosome. The sequence is that of Large ribosomal subunit protein uL2 from Methanosarcina barkeri (strain Fusaro / DSM 804).